Here is a 198-residue protein sequence, read N- to C-terminus: FMN-dependent NADH:quinone oxidoreductase (198 aa).

FMN is bound by residues Ser10, 16-18 (SQS), 94-97 (MYNF), and 138-141 (TRGG).

Belongs to the azoreductase type 1 family. In terms of assembly, homodimer. The cofactor is FMN.

The catalysed reaction is 2 a quinone + NADH + H(+) = 2 a 1,4-benzosemiquinone + NAD(+). The enzyme catalyses N,N-dimethyl-1,4-phenylenediamine + anthranilate + 2 NAD(+) = 2-(4-dimethylaminophenyl)diazenylbenzoate + 2 NADH + 2 H(+). Quinone reductase that provides resistance to thiol-specific stress caused by electrophilic quinones. Its function is as follows. Also exhibits azoreductase activity. Catalyzes the reductive cleavage of the azo bond in aromatic azo compounds to the corresponding amines. The chain is FMN-dependent NADH:quinone oxidoreductase from Shewanella baltica (strain OS185).